We begin with the raw amino-acid sequence, 255 residues long: Biotin carboxyl carrier protein of acetyl-CoA carboxylase 2, chloroplastic (255 aa).

A chloroplast-targeting transit peptide spans 1–87 (MASLSVPCVK…TNVPEPAELS (87 aa)). The segment at 148 to 193 (PPAQPVALPPSPTPTSTPATAKPTSAPSSSHPPLKSPMAGTFYRSP) is disordered. Residues 149-162 (PAQPVALPPSPTPT) are compositionally biased toward pro residues. Residues 163–180 (STPATAKPTSAPSSSHPP) are compositionally biased toward low complexity. Positions 178–254 (HPPLKSPMAG…SVDTPLFVIA (77 aa)) constitute a Biotinyl-binding domain. N6-biotinyllysine is present on Lys-220.

In terms of assembly, acetyl-CoA carboxylase is a heterohexamer composed of biotin carboxyl carrier protein, biotin carboxylase and 2 subunits each of ACCase subunit alpha and ACCase plastid-coded subunit beta (accD). Primarily expressed in 7 to 10 days after flowering seeds at levels approximately 2-fold less abundant than BCCP1.

Its subcellular location is the plastid. It localises to the chloroplast. The protein operates within lipid metabolism; fatty acid biosynthesis. This protein is a component of the acetyl coenzyme A carboxylase complex; first, biotin carboxylase catalyzes the carboxylation of the carrier protein and then the transcarboxylase transfers the carboxyl group to form malonyl-CoA. This chain is Biotin carboxyl carrier protein of acetyl-CoA carboxylase 2, chloroplastic (BCCP2), found in Arabidopsis thaliana (Mouse-ear cress).